Consider the following 447-residue polypeptide: N-succinylarginine dihydrolase (447 aa).

Substrate-binding positions include 19–28, asparagine 110, and 137–138; these read AGLSFGNEAS and HR. The active site involves glutamate 174. Residue arginine 212 coordinates substrate. Histidine 248 is a catalytic residue. Residues aspartate 250 and asparagine 359 each contribute to the substrate site. Catalysis depends on cysteine 365, which acts as the Nucleophile.

Belongs to the succinylarginine dihydrolase family. In terms of assembly, homodimer.

The enzyme catalyses N(2)-succinyl-L-arginine + 2 H2O + 2 H(+) = N(2)-succinyl-L-ornithine + 2 NH4(+) + CO2. The protein operates within amino-acid degradation; L-arginine degradation via AST pathway; L-glutamate and succinate from L-arginine: step 2/5. Its function is as follows. Catalyzes the hydrolysis of N(2)-succinylarginine into N(2)-succinylornithine, ammonia and CO(2). The chain is N-succinylarginine dihydrolase from Salmonella typhimurium (strain LT2 / SGSC1412 / ATCC 700720).